A 236-amino-acid polypeptide reads, in one-letter code: Uridylate kinase (236 aa).

10-13 is a binding site for ATP; sequence KLSG. A UMP-binding site is contributed by G52. ATP is bound by residues G53 and R57. UMP contacts are provided by residues D72 and 133 to 140; that span reads TGNPFFTT. T160, Y166, and D169 together coordinate ATP.

Belongs to the UMP kinase family. Homohexamer.

It localises to the cytoplasm. It carries out the reaction UMP + ATP = UDP + ADP. It functions in the pathway pyrimidine metabolism; CTP biosynthesis via de novo pathway; UDP from UMP (UMPK route): step 1/1. With respect to regulation, inhibited by UTP. Functionally, catalyzes the reversible phosphorylation of UMP to UDP. This Cupriavidus metallidurans (strain ATCC 43123 / DSM 2839 / NBRC 102507 / CH34) (Ralstonia metallidurans) protein is Uridylate kinase.